We begin with the raw amino-acid sequence, 342 residues long: Glycerol-1-phosphate dehydrogenase [NAD(P)+] (342 aa).

NAD(+) contacts are provided by residues 84–88 and 106–109; these read GRPID and TSAS. Asp-111 contributes to the substrate binding site. Ser-115 is an NAD(+) binding site. Asp-160 is a binding site for substrate. Asp-160 and His-241 together coordinate Zn(2+). Residue His-245 participates in substrate binding. His-260 serves as a coordination point for Zn(2+).

It belongs to the glycerol-1-phosphate dehydrogenase family. Homodimer. Zn(2+) is required as a cofactor.

It is found in the cytoplasm. The catalysed reaction is sn-glycerol 1-phosphate + NAD(+) = dihydroxyacetone phosphate + NADH + H(+). The enzyme catalyses sn-glycerol 1-phosphate + NADP(+) = dihydroxyacetone phosphate + NADPH + H(+). The protein operates within membrane lipid metabolism; glycerophospholipid metabolism. Its function is as follows. Catalyzes the NAD(P)H-dependent reduction of dihydroxyacetonephosphate (DHAP or glycerone phosphate) to glycerol 1-phosphate (G1P). The G1P thus generated is used as the glycerophosphate backbone of phospholipids in the cellular membranes of Archaea. This is Glycerol-1-phosphate dehydrogenase [NAD(P)+] from Pyrobaculum arsenaticum (strain DSM 13514 / JCM 11321 / PZ6).